Here is a 473-residue protein sequence, read N- to C-terminus: UDP-glycosyltransferase 71B1 (473 aa).

His-15 serves as the catalytic Proton acceptor. His-15 serves as a coordination point for an anthocyanidin. Residue Asp-110 is the Charge relay of the active site. Residues Thr-132, Ala-342, Gln-344, His-359, Trp-362, Asn-363, Ser-364, and Glu-367 each contribute to the UDP-alpha-D-glucose site. Ala-382 contacts an anthocyanidin. Residues Glu-383 and Gln-384 each contribute to the UDP-alpha-D-glucose site.

The protein belongs to the UDP-glycosyltransferase family.

It catalyses the reaction a flavonol + UDP-alpha-D-glucose = a flavonol 3-O-beta-D-glucoside + UDP + H(+). Possesses quercetin 3-O-glucosyltransferase activity in vitro. Also active in vitro on benzoates and benzoate derivatives. In Arabidopsis thaliana (Mouse-ear cress), this protein is UDP-glycosyltransferase 71B1 (UGT71B1).